The chain runs to 585 residues: Complement component C8 alpha chain (585 aa).

A signal peptide spans 1–20 (MLVAAFFTLFLVTCQPAVTA). Positions 21-30 (QEKVNQRVNR) are excised as a propeptide. The TSP type-1 1 domain occupies 38-91 (DCQLSSWSEWTDCFPCQDTKYRHRSLLQPNKFGGTICSGDIWDRASCYSPTACL). Intrachain disulfides connect C39-C74, C50-C84, C53-C90, C96-C108, C102-C121, C115-C130, and C140-C177. W44 carries C-linked (Man) tryptophan glycosylation. The LDL-receptor class A domain maps to 94-132 (AQCGQDFQCKETGRCLKRHLVCNGENDCLDGSDEDNCED). 6 residues coordinate Ca(2+): L113, N116, E118, D120, D126, and E127. An MACPF domain is found at 136-499 (TESDCAQYDP…QYLMEFNACR (364 aa)). 4 beta stranded membrane-spanning segments follow: residues 248–256 (AGVTISAGL), 259–266 (SPLLGTVG), 377–384 (GGFGEIQY), and 391–396 (AQGILS). A disulfide bridge links C375 with C400. N-linked (GlcNAc...) asparagine glycosylation is present at N438. Intrachain disulfides connect C498–C545, C500–C516, C503–C518, and C520–C529. In terms of domain architecture, EGF-like spans 499–530 (RCGPCFNNGKPILEGTSCRCQCSLGLQGPACE). The 45-residue stretch at 540-584 (DGHWSCWGSWSPCTAGTRERRRECNNPAPQNGGAPCPGWRVQTQA) folds into the TSP type-1 2 domain. C-linked (Man) tryptophan glycans are attached at residues W543, W546, and W549. 2 disulfides stabilise this stretch: C552/C585 and C563/C575.

This sequence belongs to the complement C6/C7/C8/C9 family. As to quaternary structure, heterotrimer of 3 chains: alpha (C8A), beta (C8B) and gamma (C8G); the alpha and gamma chains are disulfide bonded. Component of the membrane attack complex (MAC), composed of complement C5b, C6, C7, C8A, C8B, C8G and multiple copies of the pore-forming subunit C9.

It is found in the secreted. The protein localises to the target cell membrane. Its activity is regulated as follows. Membrane attack complex (MAC) assembly is inhibited by CD59, thereby protecting self-cells from damage during complement activation. CD59 acts by binding to the beta-haipins of C8 (C8A and C8B), forming an intermolecular beta-sheet that prevents incorporation of the multiple copies of C9 required for complete formation of the osmolytic pore. MAC assembly is also inhibited by clusterin (CLU) chaperones that inhibit polymerization of C9. Component of the membrane attack complex (MAC), a multiprotein complex activated by the complement cascade, which inserts into a target cell membrane and forms a pore, leading to target cell membrane rupture and cell lysis. The MAC is initiated by proteolytic cleavage of C5 into complement C5b in response to the classical, alternative, lectin and GZMK complement pathways. The complement pathways consist in a cascade of proteins that leads to phagocytosis and breakdown of pathogens and signaling that strengthens the adaptive immune system. C8A, together with C8B and C8G, inserts into the target membrane, but does not form pores by itself. During MAC assembly, associates with C5b, C6 and C7 to form the C5b8 intermediate complex that inserts into the target membrane and traverses the bilayer increasing membrane rigidity. This is Complement component C8 alpha chain (C8A) from Oryctolagus cuniculus (Rabbit).